Reading from the N-terminus, the 159-residue chain is Neuroglobin (159 aa).

In terms of domain architecture, Globin spans 3–151; that stretch reads KLSSKDKELI…VVASMSRGWA (149 aa). Heme b is bound by residues histidine 66 and histidine 98.

This sequence belongs to the globin family. Monomer. Homodimers and homotetramers. Mainly monomeric but also detected as part of homodimers and homotetramers.

It is found in the cytoplasm. The protein resides in the cytosol. Its subcellular location is the mitochondrion matrix. The catalysed reaction is Fe(III)-heme b-[protein] + nitric oxide + H2O = Fe(II)-heme b-[protein] + nitrite + 2 H(+). Monomeric globin with a bis-histidyl six-coordinate heme-iron atom through which it can bind dioxygen, carbon monoxide and nitric oxide. Could help transport oxygen and increase its availability to the metabolically active neuronal tissues, though its low quantity in tissues as well as its high affinity for dioxygen, which may limit its oxygen-releasing ability, argue against it. The ferrous/deoxygenated form exhibits a nitrite reductase activity and it could produce nitric oxide which in turn inhibits cellular respiration in response to hypoxia. In its ferrous/deoxygenated state, it may also exhibit GDI (Guanine nucleotide Dissociation Inhibitor) activity toward heterotrimeric G-alpha proteins, thereby regulating signal transduction to facilitate neuroprotective responses in the wake of hypoxia and associated oxidative stress. The sequence is that of Neuroglobin (ngb) from Tetraodon nigroviridis (Spotted green pufferfish).